The sequence spans 312 residues: Olfactory receptor 10D3 (312 aa).

Residues 1-26 lie on the Extracellular side of the membrane; that stretch reads MEVKNCCMVTEFILLGIPHTEGLEMT. The chain crosses the membrane as a helical span at residues 27-47; the sequence is LFVLFLPFYACTLLGNVSILV. The Cytoplasmic segment spans residues 48 to 57; that stretch reads AVMSSARLHT. The chain crosses the membrane as a helical span at residues 58 to 78; sequence PMYFFLGNLSVFDMGFSSVTC. Residues 79-97 are Extracellular-facing; sequence PKMLLYLMGLSRLISYKDC. A disulfide bridge connects residues Cys-97 and Cys-179. The chain crosses the membrane as a helical span at residues 98 to 118; sequence VCQLFFFHFLGSIECFLFTVM. At 119–139 the chain is on the cytoplasmic side; that stretch reads AYDRFTAICYPLRYTVIMNPR. Residues 140 to 160 form a helical membrane-spanning segment; sequence ICVALAVGTWLLGCIHSSILT. The Extracellular segment spans residues 161–197; it reads SLTFTLPYCGPNEVDHFFCDIPALLPLACADTSLAQR. A helical membrane pass occupies residues 198–218; it reads VSFTNVGLISLVCFLLILLSY. Over 219–239 the chain is Cytoplasmic; sequence TRITISILSIRTTEGRRRAFS. Residues 240 to 260 traverse the membrane as a helical segment; it reads TCSAHLIAILCAYGPIITVYL. Over 261-266 the chain is Extracellular; sequence QPTPNP. Residues 267 to 287 traverse the membrane as a helical segment; it reads MLGTVVQILMNLVGPMLNPLI. Residues 288–312 lie on the Cytoplasmic side of the membrane; it reads YTLRNKEVKTALKTILHRTGHVPES.

The protein belongs to the G-protein coupled receptor 1 family.

The protein localises to the cell membrane. In terms of biological role, odorant receptor. This chain is Olfactory receptor 10D3, found in Homo sapiens (Human).